Reading from the N-terminus, the 458-residue chain is Homogentisate 1,2-dioxygenase (458 aa).

Catalysis depends on His-308, which acts as the Proton acceptor. His-351 and Glu-357 together coordinate Fe cation. Homogentisate is bound by residues Tyr-366 and His-387. His-387 provides a ligand contact to Fe cation.

The protein belongs to the homogentisate dioxygenase family. In terms of assembly, hexamer; dimer of trimers. It depends on Fe cation as a cofactor.

It carries out the reaction homogentisate + O2 = 4-maleylacetoacetate + H(+). The protein operates within amino-acid degradation; L-phenylalanine degradation; acetoacetate and fumarate from L-phenylalanine: step 4/6. Its function is as follows. Involved in the catabolism of homogentisate (2,5-dihydroxyphenylacetate or 2,5-OH-PhAc), a central intermediate in the degradation of phenylalanine and tyrosine. Catalyzes the oxidative ring cleavage of the aromatic ring of homogentisate to yield maleylacetoacetate. The chain is Homogentisate 1,2-dioxygenase from Xanthomonas axonopodis pv. citri (strain 306).